The sequence spans 282 residues: Sulfur carrier protein FdhD (282 aa).

Cys115 acts as the Cysteine persulfide intermediate in catalysis.

It belongs to the FdhD family.

It localises to the cytoplasm. Its function is as follows. Required for formate dehydrogenase (FDH) activity. Acts as a sulfur carrier protein that transfers sulfur from IscS to the molybdenum cofactor prior to its insertion into FDH. The protein is Sulfur carrier protein FdhD of Streptomyces coelicolor (strain ATCC BAA-471 / A3(2) / M145).